Here is a 192-residue protein sequence, read N- to C-terminus: UPF0312 protein plu2095 (192 aa).

An N-terminal signal peptide occupies residues Met-1 to Ala-23.

The protein belongs to the UPF0312 family. Type 1 subfamily.

The protein localises to the periplasm. This Photorhabdus laumondii subsp. laumondii (strain DSM 15139 / CIP 105565 / TT01) (Photorhabdus luminescens subsp. laumondii) protein is UPF0312 protein plu2095.